We begin with the raw amino-acid sequence, 853 residues long: DNA mismatch repair protein MutS (853 aa).

Residue 614–621 participates in ATP binding; the sequence is GPNMGGKS.

The protein belongs to the DNA mismatch repair MutS family.

In terms of biological role, this protein is involved in the repair of mismatches in DNA. It is possible that it carries out the mismatch recognition step. This protein has a weak ATPase activity. The polypeptide is DNA mismatch repair protein MutS (Shigella boydii serotype 18 (strain CDC 3083-94 / BS512)).